The chain runs to 296 residues: Inactive uridine phosphorylase B (296 aa).

Belongs to the PNP/UDP phosphorylase family. As to quaternary structure, homodimer.

The chain is Inactive uridine phosphorylase B from Schistosoma mansoni (Blood fluke).